A 305-amino-acid chain; its full sequence is Sulfate adenylyltransferase subunit 2 (305 aa).

This sequence belongs to the PAPS reductase family. CysD subfamily. Heterodimer composed of CysD, the smaller subunit, and CysN.

It carries out the reaction sulfate + ATP + H(+) = adenosine 5'-phosphosulfate + diphosphate. The protein operates within sulfur metabolism; hydrogen sulfide biosynthesis; sulfite from sulfate: step 1/3. Its function is as follows. With CysN forms the ATP sulfurylase (ATPS) that catalyzes the adenylation of sulfate producing adenosine 5'-phosphosulfate (APS) and diphosphate, the first enzymatic step in sulfur assimilation pathway. APS synthesis involves the formation of a high-energy phosphoric-sulfuric acid anhydride bond driven by GTP hydrolysis by CysN coupled to ATP hydrolysis by CysD. This is Sulfate adenylyltransferase subunit 2 from Pseudomonas entomophila (strain L48).